A 547-amino-acid chain; its full sequence is Chaperonin GroEL 1 (547 aa).

ATP is bound by residues 30–33, Lys51, 87–91, Gly415, and Asp494; these read TLGP and DGTTT. Residues 524–547 are disordered; sequence PKGKAKGGGAGAGMPDYGGDDMDY.

Belongs to the chaperonin (HSP60) family. As to quaternary structure, forms a cylinder of 14 subunits composed of two heptameric rings stacked back-to-back. Interacts with the co-chaperonin GroES.

The protein resides in the cytoplasm. The enzyme catalyses ATP + H2O + a folded polypeptide = ADP + phosphate + an unfolded polypeptide.. Its function is as follows. Together with its co-chaperonin GroES, plays an essential role in assisting protein folding. The GroEL-GroES system forms a nano-cage that allows encapsulation of the non-native substrate proteins and provides a physical environment optimized to promote and accelerate protein folding. This chain is Chaperonin GroEL 1, found in Myxococcus xanthus (strain DK1622).